Here is a 336-residue protein sequence, read N- to C-terminus: Inositol 2-dehydrogenase (336 aa).

This sequence belongs to the Gfo/Idh/MocA family. In terms of assembly, homotetramer.

The enzyme catalyses myo-inositol + NAD(+) = scyllo-inosose + NADH + H(+). Its function is as follows. Involved in the oxidation of myo-inositol (MI) to 2-keto-myo-inositol (2KMI or 2-inosose). The sequence is that of Inositol 2-dehydrogenase from Pseudomonas fluorescens (strain SBW25).